Consider the following 556-residue polypeptide: Arginine--tRNA ligase (556 aa).

The 'HIGH' region motif lies at 134–144 (ANPTGPLHIGH).

The protein belongs to the class-I aminoacyl-tRNA synthetase family. Monomer.

The protein localises to the cytoplasm. It carries out the reaction tRNA(Arg) + L-arginine + ATP = L-arginyl-tRNA(Arg) + AMP + diphosphate. The protein is Arginine--tRNA ligase of Micrococcus luteus (strain ATCC 4698 / DSM 20030 / JCM 1464 / CCM 169 / CCUG 5858 / IAM 1056 / NBRC 3333 / NCIMB 9278 / NCTC 2665 / VKM Ac-2230) (Micrococcus lysodeikticus).